A 104-amino-acid chain; its full sequence is MSEIRKNDHRLMQVLLAPVISEKATLVADKNEQVVFEVAPDATKQEVKAAVELLFKVEVDSVNVLVQKGKQKRFGRSMGRRKDVKKAYVCLKPGQEINFEAEAK.

It belongs to the universal ribosomal protein uL23 family. In terms of assembly, part of the 50S ribosomal subunit. Contacts protein L29, and trigger factor when it is bound to the ribosome.

Functionally, one of the early assembly proteins it binds 23S rRNA. One of the proteins that surrounds the polypeptide exit tunnel on the outside of the ribosome. Forms the main docking site for trigger factor binding to the ribosome. The polypeptide is Large ribosomal subunit protein uL23 (Burkholderia multivorans (strain ATCC 17616 / 249)).